Consider the following 321-residue polypeptide: Peptidase 1 (321 aa).

The signal sequence occupies residues 1 to 18 (MKIILAIASLLVLSAVYA). A propeptide spanning residues 19-98 (RPASIKTFEE…LKTQFDLNAE (80 aa)) is cleaved from the precursor. Asn34 carries an N-linked (GlcNAc...) asparagine glycan. Cys130 and Cys170 are oxidised to a cystine. The active site involves Cys133. Residue Asn151 is glycosylated (N-linked (GlcNAc...) asparagine). Residues His269 and Asn289 contribute to the active site.

The protein belongs to the peptidase C1 family.

The protein localises to the secreted. It catalyses the reaction Broad endopeptidase specificity.. Probable thiol protease. The sequence is that of Peptidase 1 (EURM1) from Euroglyphus maynei (Mayne's house dust mite).